The primary structure comprises 407 residues: MAQPTAVRLFTSESVTEGHPDKICDAISDTILDALLEKDPQSRVAVETVVTTGIVHVVGEVRTSAYVEIPQLVRNKLIEIGFNSSEVGFDGRTCGVSVSIGEQSQEIADGVDNSDEARTNGDVEEDDRAGAGDQGLMFGYATNETEEYMPLPIALAHRLSRRLTQVRKEGIVPHLRPDGKTQVTFAYDAQDRPSHLDTVVISTQHDPEVDRAWLETQLREHVIDWVIKDAGIEDLATGEITVLINPSGSFILGGPMGDAGLTGRKIIVDTYGGMARHGGGAFSGKDPSKVDRSAAYAMRWVAKNIVAAGLADRAEVQVAYAIGRAKPVGLYVETFDTNKEGLSDEQIQAAVLEVFDLRPAAIIRELDLLRPIYADTAAYGHFGRTDLDLPWEAIDRVDELRAALKLA.

Residue His-19 coordinates ATP. Asp-21 is a Mg(2+) binding site. Residue Glu-47 coordinates K(+). L-methionine contacts are provided by Glu-60 and Gln-103. Residues 103-113 (QSQEIADGVDN) form a flexible loop region. The segment at 107-134 (IADGVDNSDEARTNGDVEEDDRAGAGDQ) is disordered. ATP-binding positions include 178–180 (DGK), Asp-258, 264–265 (RK), Ala-281, and Lys-285. Asp-258 contacts L-methionine. Lys-289 contacts L-methionine.

This sequence belongs to the AdoMet synthase family. Homotetramer; dimer of dimers. Mg(2+) serves as cofactor. Requires K(+) as cofactor.

The protein resides in the cytoplasm. It catalyses the reaction L-methionine + ATP + H2O = S-adenosyl-L-methionine + phosphate + diphosphate. It functions in the pathway amino-acid biosynthesis; S-adenosyl-L-methionine biosynthesis; S-adenosyl-L-methionine from L-methionine: step 1/1. Its function is as follows. Catalyzes the formation of S-adenosylmethionine (AdoMet) from methionine and ATP. The overall synthetic reaction is composed of two sequential steps, AdoMet formation and the subsequent tripolyphosphate hydrolysis which occurs prior to release of AdoMet from the enzyme. This chain is S-adenosylmethionine synthase, found in Corynebacterium glutamicum (strain ATCC 13032 / DSM 20300 / JCM 1318 / BCRC 11384 / CCUG 27702 / LMG 3730 / NBRC 12168 / NCIMB 10025 / NRRL B-2784 / 534).